The chain runs to 98 residues: uncharacterized protein (98 aa).

It belongs to the HHV-5 UL19 protein family.

This is an uncharacterized protein from Human cytomegalovirus (strain AD169) (HHV-5).